We begin with the raw amino-acid sequence, 211 residues long: Large ribosomal subunit protein mL48 (211 aa).

The N-terminal 27 residues, 1-27 (MSGTLGKVLGVWTNTVSKQGFSLLRFR), are a transit peptide targeting the mitochondrion. Lys-198 bears the N6-succinyllysine mark.

Belongs to the mitochondrion-specific ribosomal protein mL48 family. In terms of assembly, component of the mitochondrial ribosome large subunit (39S) which comprises a 16S rRNA and about 50 distinct proteins. Interacts with OXA1L.

The protein localises to the mitochondrion. The protein is Large ribosomal subunit protein mL48 (Mrpl48) of Mus musculus (Mouse).